A 606-amino-acid polypeptide reads, in one-letter code: Serine/threonine-protein kinase A-Raf (606 aa).

Residues 19-91 (GTVKVYLPNK…DGEELIVEVL (73 aa)) enclose the RBD domain. Residues 98–144 (MHNFVRKTFFSLAFCDFCLKFLFHGFRCQTCGYKFHQHCSSKVPTVC) form a Phorbol-ester/DAG-type zinc finger. Positions 99, 112, 115, 125, 128, 133, 136, and 144 each coordinate Zn(2+). 2 positions are modified to phosphoserine: S157 and S162. Disordered regions lie at residues 158–207 (VQDL…NAPL) and 241–290 (TDAA…DKKK). Residue T181 is modified to Phosphothreonine. A phosphoserine mark is found at S186, S257, and S269. Positions 254-267 (PRGSPSPASVSSGR) are enriched in low complexity. Basic and acidic residues predominate over residues 274 to 289 (SPSEQRERKSLADDKK). In terms of domain architecture, Protein kinase spans 310–570 (VQLLKRIGTG…PQILATIELL (261 aa)). Residues 316-324 (IGTGSFGTV) and K336 each bind ATP. T318 carries the post-translational modification Phosphothreonine. Residue D429 is the Proton acceptor of the active site.

Belongs to the protein kinase superfamily. TKL Ser/Thr protein kinase family. RAF subfamily. Interacts with TH1L/NELFD. It depends on Zn(2+) as a cofactor. Dephosphorylation by the SHOC2-MRAS-PP1c (SMP) complex consisting of SHOC2, GTP-bound M-Ras/MRAS and the catalytic subunit of protein phosphatase 1 (PPP1CA, PPP1CB or PPP1CC); this relieves inactivation and stimulates kinase activity.

It catalyses the reaction L-seryl-[protein] + ATP = O-phospho-L-seryl-[protein] + ADP + H(+). It carries out the reaction L-threonyl-[protein] + ATP = O-phospho-L-threonyl-[protein] + ADP + H(+). Involved in the transduction of mitogenic signals from the cell membrane to the nucleus. May also regulate the TOR signaling cascade. Phosphorylates PFKFB2. The chain is Serine/threonine-protein kinase A-Raf (ARAF) from Sus scrofa (Pig).